The sequence spans 204 residues: Lysozyme G (204 aa).

A signal peptide spans 1-19 (MHLMLVLLGLAALLGTSQS). 2 cysteine pairs are disulfide-bonded: Cys-23–Cys-79 and Cys-37–Cys-48. Active-site residues include Glu-92 and Asp-105.

This sequence belongs to the glycosyl hydrolase 23 family.

Its subcellular location is the secreted. It catalyses the reaction Hydrolysis of (1-&gt;4)-beta-linkages between N-acetylmuramic acid and N-acetyl-D-glucosamine residues in a peptidoglycan and between N-acetyl-D-glucosamine residues in chitodextrins.. Has bacteriolytic activity against M.luteus. The polypeptide is Lysozyme G (Dromaius novaehollandiae (Emu)).